The sequence spans 593 residues: Aspartate--tRNA(Asp/Asn) ligase (593 aa).

Glutamate 172 lines the L-aspartate pocket. Positions glutamine 196–lysine 199 are aspartate. Arginine 218 is an L-aspartate binding site. ATP is bound by residues arginine 218 to glutamate 220 and glutamine 227. Residue histidine 450 coordinates L-aspartate. ATP is bound at residue glutamate 484. Arginine 491 contacts L-aspartate. Glycine 536–arginine 539 provides a ligand contact to ATP.

The protein belongs to the class-II aminoacyl-tRNA synthetase family. Type 1 subfamily. In terms of assembly, homodimer.

Its subcellular location is the cytoplasm. It carries out the reaction tRNA(Asx) + L-aspartate + ATP = L-aspartyl-tRNA(Asx) + AMP + diphosphate. Aspartyl-tRNA synthetase with relaxed tRNA specificity since it is able to aspartylate not only its cognate tRNA(Asp) but also tRNA(Asn). Reaction proceeds in two steps: L-aspartate is first activated by ATP to form Asp-AMP and then transferred to the acceptor end of tRNA(Asp/Asn). The chain is Aspartate--tRNA(Asp/Asn) ligase from Nitrosomonas eutropha (strain DSM 101675 / C91 / Nm57).